Here is a 510-residue protein sequence, read N- to C-terminus: Dolichyl-P-Man:Man5GlcNAc2-PP-dolichol alpha-1,3-mannosyltransferase Alg3 (510 aa).

Residues 1–43 (MAPPKAASHRPAVRRKKSGTLVDSILDKYLNVRFFKYLLLEPA) lie on the Cytoplasmic side of the membrane. The chain crosses the membrane as a helical span at residues 44-64 (ALPIVGLFVLLAELVINVVVI). The Lumenal portion of the chain corresponds to 65–97 (QRVPYTEIDWVAYMQECEGFLNGTTNYSLLRGD). Residues 98-118 (TGPLVYPAAFVYIYSALYYVT) form a helical membrane-spanning segment. The Cytoplasmic segment spans residues 119-125 (SHGTNVR). A helical transmembrane segment spans residues 126–146 (LAQYIFAGIYLLQLALVLRLY). Residues 147–171 (SKSRKVPPYVLVLSAFTSYRIHSIY) are Lumenal-facing. A helical transmembrane segment spans residues 172-192 (VLRLFNDPVAVLLLYAALNLF). Residues 193–211 (LDRRWTLGSTFFSLAVGVK) are Cytoplasmic-facing. The helical transmembrane segment at 212–232 (MNILLFAPALLLFYLANLGLL) threads the bilayer. Residue Arg-233 is a topological domain, lumenal. Residues 234-254 (TILQLAVCGVIQLLLGAPFLL) form a helical membrane-spanning segment. Over 255–294 (THPVEYLRGSFDLGRIFEHKWTVNYRFLSRDVFENRTFHV) the chain is Cytoplasmic. A helical membrane pass occupies residues 295 to 315 (SLLGLHLLLLLAFAKPIWTFF). Residues 316-403 (QSYVRLRRIE…YGIHFDRCTQ (88 aa)) are Lumenal-facing. The interval 337–358 (LQLKAQKRPKKVEKDKDKDQKK) is disordered. Over residues 348 to 358 (VEKDKDKDQKK) the composition is skewed to basic and acidic residues. Residues 404-424 (LALLPFFLCNLVGVACSRSLH) form a helical membrane-spanning segment. Over 425 to 426 (YQ) the chain is Cytoplasmic. The chain crosses the membrane as a helical span at residues 427–447 (FYVWYFHSLPYLAWSTPYSLG). The Lumenal segment spans residues 448–464 (VRCLILGLIEYCWNTYP). Residues 465-485 (STNFSSAALHFTHIILLAGVA) form a helical membrane-spanning segment. Over 486–510 (KQLIQTMRINNAAKREQQEQQKKLQ) the chain is Cytoplasmic.

This sequence belongs to the glycosyltransferase ALG3 family.

The protein localises to the endoplasmic reticulum membrane. The catalysed reaction is an alpha-D-Man-(1-&gt;2)-alpha-D-Man-(1-&gt;2)-alpha-D-Man-(1-&gt;3)-[alpha-D-Man-(1-&gt;6)]-beta-D-Man-(1-&gt;4)-beta-D-GlcNAc-(1-&gt;4)-alpha-D-GlcNAc-diphospho-di-trans,poly-cis-dolichol + a di-trans,poly-cis-dolichyl beta-D-mannosyl phosphate = an alpha-D-Man-(1-&gt;2)-alpha-D-Man-(1-&gt;2)-alpha-D-Man-(1-&gt;3)-[alpha-D-Man-(1-&gt;3)-alpha-D-Man-(1-&gt;6)]-beta-D-Man-(1-&gt;4)-beta-D-GlcNAc-(1-&gt;4)-alpha-D-GlcNAc-diphospho-di-trans,poly-cis-dolichol + a di-trans,poly-cis-dolichyl phosphate + H(+). It participates in protein modification; protein glycosylation. Functionally, probable alpha-1,3-mannosyltransferase involved in the N-glycosylation pathway. Involved in glycosylation of the TNF receptor grnd, regulating its ligand affinity. Required for normal epithelial growth and architecture. Suppressor of JNK-dependent intestinal stem cell proliferation. The sequence is that of Dolichyl-P-Man:Man5GlcNAc2-PP-dolichol alpha-1,3-mannosyltransferase Alg3 from Drosophila melanogaster (Fruit fly).